The primary structure comprises 240 residues: Mediator of RNA polymerase II transcription subunit 19-B (240 aa).

Residues 1–14 show a composition bias toward polar residues; it reads MTEIFSSLYGQPDS. Disordered stretches follow at residues 1-29 and 168-240; these read MTEI…GSGK and PKKK…SSLR. Composition is skewed to basic residues over residues 168–180 and 209–221; these read PKKK…KHHR and KKKK…KKNR.

The protein belongs to the Mediator complex subunit 19 family. Component of the Mediator complex.

It is found in the nucleus. In terms of biological role, component of the Mediator complex, a coactivator involved in the regulated transcription of nearly all RNA polymerase II-dependent genes. Mediator functions as a bridge to convey information from gene-specific regulatory proteins to the basal RNA polymerase II transcription machinery. Mediator is recruited to promoters by direct interactions with regulatory proteins and serves as a scaffold for the assembly of a functional preinitiation complex with RNA polymerase II and the general transcription factors. This Danio rerio (Zebrafish) protein is Mediator of RNA polymerase II transcription subunit 19-B (med19b).